The sequence spans 311 residues: Malate dehydrogenase (311 aa).

NAD(+)-binding positions include 7–13 (GAAGGIG) and Asp-34. The substrate site is built by Arg-81 and Arg-87. NAD(+) contacts are provided by residues Asn-94 and 117–119 (ITN). The substrate site is built by Asn-119 and Arg-153. Catalysis depends on His-177, which acts as the Proton acceptor. Met-227 is an NAD(+) binding site.

Belongs to the LDH/MDH superfamily. MDH type 1 family. In terms of assembly, homodimer.

The enzyme catalyses (S)-malate + NAD(+) = oxaloacetate + NADH + H(+). Functionally, catalyzes the reversible oxidation of malate to oxaloacetate. The protein is Malate dehydrogenase of Aliivibrio salmonicida (strain LFI1238) (Vibrio salmonicida (strain LFI1238)).